The chain runs to 226 residues: 2-amino-5-formylamino-6-ribosylaminopyrimidin-4(3H)-one 5'-monophosphate deformylase (226 aa).

Fe cation-binding residues include Glu-29, His-31, Asp-40, and His-108.

Belongs to the creatininase superfamily. FAPy deformylase family. In terms of assembly, homodimer. Requires Fe(2+) as cofactor. It depends on Zn(2+) as a cofactor.

It catalyses the reaction 2-amino-5-formylamino-6-(5-phospho-D-ribosylamino)pyrimidin-4(3H)-one + H2O = 2,5-diamino-6-(1-D-ribosylamino)pyrimidin-4(3H)-one 5'-phosphate + formate + H(+). Its pathway is cofactor biosynthesis; coenzyme F420 biosynthesis. It functions in the pathway cofactor biosynthesis; riboflavin biosynthesis. In terms of biological role, catalyzes the hydrolysis of the formamide of 2-amino-5-formylamino-6-ribosylamino-4(3H)-pyrimidinone 5'-monophosphate (FAPy) to form 2,5-diamino-6-ribosylamino-4(3H)-pyrimidinone 5'-phosphate (APy). This is 2-amino-5-formylamino-6-ribosylaminopyrimidin-4(3H)-one 5'-monophosphate deformylase from Methanocaldococcus vulcanius (strain ATCC 700851 / DSM 12094 / M7) (Methanococcus vulcanius).